Reading from the N-terminus, the 1523-residue chain is WD repeat-containing protein 62 (1523 aa).

Ala-2 carries the N-acetylalanine modification. The residue at position 33 (Ser-33) is a Phosphoserine. Residue Thr-46 is modified to Phosphothreonine. WD repeat units follow at residues 109–150 (TTRK…QVAE), 153–194 (GHKY…VVAS), 196–234 (KVSCRVIALSFSEDSSYFVTVGNRHVRFWFLEASTEAKV), 291–330 (INLKVSLSSCLCVSDELIFCGCTDGIVRIFQAHSLLYLTN), 357–396 (AVYPDTVALTFDPVHQWLSCVYKDHSIYIWDVKDIDEVSK), 411–450 (EVYPEFEDQRACLPSGTFLTCSSDNTIRFWNLDSASDTRW), 490–529 (DMKAGVRVMQVSPDGQHLASGDRSGNLRIHELHFMDELIK), 532–574 (AHDA…NLEQ), 578–618 (DHSS…DGLH), 626–665 (AEKTTLYDMDIDITQKYVAVACQDRNVRVYNTVSGKQKKC), 671–713 (GDEG…KMFG), and 714–752 (HSEIVTGMKFTYDCRHLITVSGDSCVFIWHLGPEITTCM). Ser-501 carries the phosphoserine modification. The segment at 762-824 (QEQQQQPKDQ…PSKDSLDPDP (63 aa)) is disordered. Over residues 776-790 (PPSQETYASTPSEIR) the composition is skewed to polar residues. Over residues 797–809 (QTEDEMEEECEPE) the composition is skewed to acidic residues. The stretch at 803–846 (EEECEPEELLKTPSKDSLDPDPRCLLTNGKLPLWAKRLLGDDDV) is one WD 13 repeat. Positions 810 to 824 (ELLKTPSKDSLDPDP) are enriched in basic and acidic residues. 2 positions are modified to phosphoserine: Ser-966 and Ser-972. Residues 1000–1072 (VSSVSSKDQS…GLGNGSLPQT (73 aa)) form a disordered region. Residue Thr-1072 is modified to Phosphothreonine. Ser-1117, Ser-1143, and Ser-1169 each carry phosphoserine. The segment at 1143 to 1258 (SPEAQPVGQG…SLHKPLSPGQ (116 aa)) is disordered. Polar residues-rich tracts occupy residues 1167-1177 (YMSSDGTNVLS) and 1199-1213 (TSVLTTGREQSISAP). Low complexity predominate over residues 1214 to 1225 (SSCSYLESTTSS). The segment covering 1226–1235 (HAKTTRSISL) has biased composition (polar residues). Phosphoserine is present on Ser-1234.

As to quaternary structure, can form homodimers (via C-terminus). Interacts (via C-terminus) with MAPKBP1 (via C-terminus). Interacts with CDK5RAP2, CEP152, CEP63 and KIAA0753. CEP63, CDK5RAP2, CEP152, WDR62 are proposed to form a stepwise assembled complex at the centrosome forming a ring near parental centrioles. As to expression, prominent in neural crest lineages from 9.5 dpc to 11.5 dpc. Also expressed in the ventricular and subventricular zones during the period of cerebral cortical neurogenesis (11.5-16.5 dpc), with expression decreasing in intensity by 17.5 dpc. In the cerebellum, it is strongly expressed in precursors of granule neurons at late embryonic and early postnatal stages; by postnatal day 9 (P9). Present in fetal brain, enriched within the ventricular and subventricular zone (at protein level).

It localises to the nucleus. The protein localises to the cytoplasm. The protein resides in the cytoskeleton. Its subcellular location is the spindle pole. It is found in the microtubule organizing center. It localises to the centrosome. The protein localises to the centriole. Functionally, required for cerebral cortical development. Plays a role in neuronal proliferation and migration. Plays a role in mother-centriole-dependent centriole duplication; the function seems also to involve CEP152, CDK5RAP2 and CEP63 through a stepwise assembled complex at the centrosome that recruits CDK2 required for centriole duplication. The chain is WD repeat-containing protein 62 (Wdr62) from Mus musculus (Mouse).